The following is a 110-amino-acid chain: uncharacterized protein (110 aa).

Polar residues predominate over residues 1 to 20 (MNQQNQKISNPQTPVPTTSE). Residues 1 to 24 (MNQQNQKISNPQTPVPTTSEMNDR) form a disordered region.

This is an uncharacterized protein from Bacillus subtilis (strain 168).